We begin with the raw amino-acid sequence, 311 residues long: tRNA-cytidine(32) 2-sulfurtransferase (311 aa).

The short motif at 58-63 (SGGKDS) is the PP-loop motif element. [4Fe-4S] cluster contacts are provided by cysteine 133, cysteine 136, and cysteine 224.

Belongs to the TtcA family. In terms of assembly, homodimer. Requires Mg(2+) as cofactor. [4Fe-4S] cluster is required as a cofactor.

It localises to the cytoplasm. The enzyme catalyses cytidine(32) in tRNA + S-sulfanyl-L-cysteinyl-[cysteine desulfurase] + AH2 + ATP = 2-thiocytidine(32) in tRNA + L-cysteinyl-[cysteine desulfurase] + A + AMP + diphosphate + H(+). It participates in tRNA modification. Functionally, catalyzes the ATP-dependent 2-thiolation of cytidine in position 32 of tRNA, to form 2-thiocytidine (s(2)C32). The sulfur atoms are provided by the cysteine/cysteine desulfurase (IscS) system. The sequence is that of tRNA-cytidine(32) 2-sulfurtransferase from Polaromonas sp. (strain JS666 / ATCC BAA-500).